The primary structure comprises 236 residues: 28 kDa antigen (236 aa).

The N-terminal stretch at 1–22 (MPNRRRCKLSTAISTVATLAIA) is a signal peptide. The segment at 76–105 (PVPSLTGTDDPGNGLRTPGLTSPDLTNQEL) is disordered. The segment covering 94–105 (GLTSPDLTNQEL) has biased composition (polar residues).

It to M.tuberculosis ERP.

In Mycobacterium leprae (strain TN), this protein is 28 kDa antigen.